The sequence spans 1024 residues: Beta-galactosidase (1024 aa).

Substrate contacts are provided by N103 and D202. Position 202 (D202) interacts with Na(+). Mg(2+) is bound by residues E417, H419, and E462. Substrate contacts are provided by residues E462 and E538–H541. E462 acts as the Proton donor in catalysis. The active-site Nucleophile is E538. N598 provides a ligand contact to Mg(2+). F602 and N605 together coordinate Na(+). Residues N605 and W1000 each contribute to the substrate site.

The protein belongs to the glycosyl hydrolase 2 family. As to quaternary structure, homotetramer. Requires Mg(2+) as cofactor. The cofactor is Na(+).

It catalyses the reaction Hydrolysis of terminal non-reducing beta-D-galactose residues in beta-D-galactosides.. The chain is Beta-galactosidase from Escherichia coli O1:K1 / APEC.